The sequence spans 488 residues: GTPase Der (488 aa).

EngA-type G domains follow at residues 3–166 and 199–372; these read PVVA…AEAM and IKLA…DSAT. Residues 9-16, 56-60, 118-121, 205-212, 252-256, and 317-320 contribute to the GTP site; these read GRPNVGKS, DTGGI, NKVD, GKPNVGKS, DTAGV, and NKWD. In terms of domain architecture, KH-like spans 373-457; that stretch reads RRVSTSMLTR…PIQLRFQEGD (85 aa). Residues 460–488 form a disordered region; the sequence is FENKTEKLTMSQERRRKRAQSHIKDRKTK. Residues 473-488 show a composition bias toward basic residues; sequence RRRKRAQSHIKDRKTK.

This sequence belongs to the TRAFAC class TrmE-Era-EngA-EngB-Septin-like GTPase superfamily. EngA (Der) GTPase family. As to quaternary structure, associates with the 50S ribosomal subunit.

Its function is as follows. GTPase that plays an essential role in the late steps of ribosome biogenesis. The sequence is that of GTPase Der from Shewanella baltica (strain OS223).